Reading from the N-terminus, the 424-residue chain is UPF0229 protein Avin_46880 (424 aa).

The interval 57–108 is disordered; sequence RDIDEPVLHHGRGGKQTIVHPGNKEFTAGERIPRPSGGGGGGSGSGKASNSG. The span at 92–101 shows a compositional bias: gly residues; sequence SGGGGGGSGS.

This sequence belongs to the UPF0229 family.

This is UPF0229 protein Avin_46880 from Azotobacter vinelandii (strain DJ / ATCC BAA-1303).